The sequence spans 96 residues: Small ribosomal subunit protein bS20 (96 aa).

It belongs to the bacterial ribosomal protein bS20 family.

Functionally, binds directly to 16S ribosomal RNA. The polypeptide is Small ribosomal subunit protein bS20 (Thermotoga petrophila (strain ATCC BAA-488 / DSM 13995 / JCM 10881 / RKU-1)).